Reading from the N-terminus, the 168-residue chain is DNA damage-inducible transcript 3 protein (168 aa).

Residues 10–18 (FETVSSWEL) are interaction with TRIB3. Residues 10 to 26 (FETVSSWELEAWYEDLQ) form an N-terminal region. 4 positions are modified to phosphoserine; by CK2: serine 14, serine 15, serine 30, and serine 31. The tract at residues 34–130 (IGGTYISSPG…EKEQENERKV (97 aa)) is disordered. The span at 73 to 88 (TSTSQSPRSPDSSQSS) shows a compositional bias: low complexity. Phosphoserine; by MAPK14 occurs at positions 78 and 81. Residues 98–161 (QGRTRKRKQS…ETTRRALIDR (64 aa)) form the bZIP domain. The basic motif stretch occupies residues 100–129 (RTRKRKQSGQCAARAGKQRMKEKEQENERK). Basic and acidic residues predominate over residues 118–130 (RMKEKEQENERKV). The tract at residues 133 to 147 (LAEENERLKLEIERL) is leucine-zipper.

It belongs to the bZIP family. As to quaternary structure, heterodimer. Interacts with TCF7L2/TCF4, EP300/P300, HDAC1, HDAC5 and HDAC6. Interacts with TRIB3 which blocks its association with EP300/P300. Interacts with FOXO3, CEBPB and ATF4. Post-translationally, ubiquitinated, leading to its degradation by the proteasome. Phosphorylation at serine residues by MAPK14 enhances its transcriptional activation activity while phosphorylation at serine residues by CK2 inhibits its transcriptional activation activity.

It is found in the cytoplasm. The protein localises to the nucleus. Multifunctional transcription factor in ER stress response. Plays an essential role in the response to a wide variety of cell stresses and induces cell cycle arrest and apoptosis in response to ER stress. Plays a dual role both as an inhibitor of CCAAT/enhancer-binding protein (C/EBP) function and as an activator of other genes. Acts as a dominant-negative regulator of C/EBP-induced transcription: dimerizes with members of the C/EBP family, impairs their association with C/EBP binding sites in the promoter regions, and inhibits the expression of C/EBP regulated genes. Positively regulates the transcription of TRIB3, IL6, IL8, IL23, TNFRSF10B/DR5, PPP1R15A/GADD34, BBC3/PUMA, BCL2L11/BIM and ERO1L. Negatively regulates; expression of BCL2 and MYOD1, ATF4-dependent transcriptional activation of asparagine synthetase (ASNS), CEBPA-dependent transcriptional activation of hepcidin (HAMP) and CEBPB-mediated expression of peroxisome proliferator-activated receptor gamma (PPARG). Inhibits the canonical Wnt signaling pathway by binding to TCF7L2/TCF4, impairing its DNA-binding properties and repressing its transcriptional activity. Plays a regulatory role in the inflammatory response through the induction of caspase-11 (CASP4/CASP11) which induces the activation of caspase-1 (CASP1) and both these caspases increase the activation of pro-IL1B to mature IL1B which is involved in the inflammatory response. Acts as a major regulator of postnatal neovascularization through regulation of endothelial nitric oxide synthase (NOS3)-related signaling. This chain is DNA damage-inducible transcript 3 protein (Ddit3), found in Rattus norvegicus (Rat).